The following is a 382-amino-acid chain: tRNA-specific 2-thiouridylase MnmA (382 aa).

Residues 34-41 (AMSGGVDS) and L60 each bind ATP. C128 functions as the Nucleophile in the catalytic mechanism. An intrachain disulfide couples C128 to C224. G152 contributes to the ATP binding site. Residues 174 to 176 (RDQ) are interaction with tRNA. C224 serves as the catalytic Cysteine persulfide intermediate.

This sequence belongs to the MnmA/TRMU family.

Its subcellular location is the cytoplasm. It carries out the reaction S-sulfanyl-L-cysteinyl-[protein] + uridine(34) in tRNA + AH2 + ATP = 2-thiouridine(34) in tRNA + L-cysteinyl-[protein] + A + AMP + diphosphate + H(+). In terms of biological role, catalyzes the 2-thiolation of uridine at the wobble position (U34) of tRNA, leading to the formation of s(2)U34. This is tRNA-specific 2-thiouridylase MnmA from Sphingopyxis alaskensis (strain DSM 13593 / LMG 18877 / RB2256) (Sphingomonas alaskensis).